A 328-amino-acid chain; its full sequence is MQAAWLLGALLVPHLLSFGHGARGHGKEWEGVWGGALEEERDRESLMLKNLQEALGLPTGVGNKDNLAENSEGKEVWEATETQGEEEEEETTTTPSSSPTPFPSPSPTSEDTVTYILGRLASLDAGLHQLHIRLHVLDTRVVELTQGLRRLRDAASDTRDSVQALKEVQVRSEQEHGRLEGCLKGLRLGHKCFLLSRDFETQAAAQARCKARGGSLAQPADRQQMDALSRYLRAALAPYNWPVWLGVHDRRSEGLYLFENGQRVSFFAWHRALSPESGAQPSAASHPLSPDQPNGGILENCVAQASDDGSWWDHDCERRLYFVCEFPF.

An N-terminal signal peptide occupies residues Met1 to Gly21. The disordered stretch occupies residues Pro58–Asp111. The region spanning Leu188–Glu325 is the C-type lectin domain. Cystine bridges form between Cys209-Cys324 and Cys301-Cys316.

Post-translationally, O-glycosylated. Probably sulfated on the O-glycans.

The protein resides in the cytoplasm. It is found in the secreted. In terms of biological role, promotes osteogenesis by stimulating the differentiation of mesenchymal progenitors into mature osteoblasts. Important for repair and maintenance of adult bone. The sequence is that of C-type lectin domain family 11 member A (Clec11a) from Rattus norvegicus (Rat).